Consider the following 455-residue polypeptide: Tubulin alpha-1 chain (455 aa).

GTP-binding residues include Gln-11, Glu-75, Ser-144, Gly-148, Thr-149, Thr-183, Asn-210, and Asn-232. Glu-75 provides a ligand contact to Mg(2+). Glu-258 is an active-site residue.

Belongs to the tubulin family. Dimer of alpha and beta chains. A typical microtubule is a hollow water-filled tube with an outer diameter of 25 nm and an inner diameter of 15 nM. Alpha-beta heterodimers associate head-to-tail to form protofilaments running lengthwise along the microtubule wall with the beta-tubulin subunit facing the microtubule plus end conferring a structural polarity. Microtubules usually have 13 protofilaments but different protofilament numbers can be found in some organisms and specialized cells. Mg(2+) serves as cofactor.

It localises to the cytoplasm. The protein resides in the cytoskeleton. The enzyme catalyses GTP + H2O = GDP + phosphate + H(+). Its function is as follows. Tubulin is the major constituent of microtubules, a cylinder consisting of laterally associated linear protofilaments composed of alpha- and beta-tubulin heterodimers. Microtubules grow by the addition of GTP-tubulin dimers to the microtubule end, where a stabilizing cap forms. Below the cap, tubulin dimers are in GDP-bound state, owing to GTPase activity of alpha-tubulin. In Schizosaccharomyces pombe (strain 972 / ATCC 24843) (Fission yeast), this protein is Tubulin alpha-1 chain (nda2).